A 632-amino-acid polypeptide reads, in one-letter code: Protein NSP-INTERACTING KINASE 3 (632 aa).

The N-terminal stretch at 1-25 is a signal peptide; sequence MEGVRFVVWRLGFLVFVWFFDISSA. At 26 to 238 the chain is on the extracellular side; sequence TLSPTGVNYE…GTRTNGHHVA (213 aa). The N-linked (GlcNAc...) asparagine glycan is linked to Asn96. LRR repeat units follow at residues 97-121, 122-145, 147-168, and 169-193; these read LTYLQSVVLQNNAITGPIPETIGRL, EKLQSLDLSNNSFTGEIPASLGEL, NLNYLRLNNNSLIGTCPESLSK, and IEGLTLVDISYNNLSGSLPKVSART. Asn131, Asn155, Asn181, and Asn210 each carry an N-linked (GlcNAc...) asparagine glycan. A helical membrane pass occupies residues 239–259; that stretch reads LAFAASFSAAFFVFFTSGMFL. The Cytoplasmic segment spans residues 260–632; it reads WWRYRRNKQI…VEAIELSGPR (373 aa). A Phosphothreonine modification is found at Thr298. The 284-residue stretch at 301-584 folds into the Protein kinase domain; sequence FNSKNILGRG…EGDGLAERWE (284 aa). 307 to 315 contacts ATP; that stretch reads LGRGGYGIV. Thr324 carries the post-translational modification Phosphothreonine. Lys329 contributes to the ATP binding site. Phosphoserine occurs at positions 382 and 385. The segment at 415–495 is interaction with geminivirus NSP protein; the sequence is YLHEQCDPKI…DVFGFGILLL (81 aa). Asp428 acts as the Proton acceptor in catalysis. Phosphothreonine is present on residues Thr461, Thr462, and Thr467. Tyr475 carries the post-translational modification Phosphotyrosine. Ser477 is modified (phosphoserine). Thr478 bears the Phosphothreonine mark. Phosphoserine is present on Ser482. Thr557 is modified (phosphothreonine).

It belongs to the protein kinase superfamily. Ser/Thr protein kinase family. As to quaternary structure, oligomer. Interacts with geminivirus nuclear shuttle protein (NSP). Autophosphorylated. Expressed in seedlings, leaves and flowers.

The protein localises to the cell membrane. The catalysed reaction is L-seryl-[protein] + ATP = O-phospho-L-seryl-[protein] + ADP + H(+). It catalyses the reaction L-threonyl-[protein] + ATP = O-phospho-L-threonyl-[protein] + ADP + H(+). With respect to regulation, inhibited by the viral nuclear shuttle protein (NSP) that binds to the region required for oligomerization. In terms of biological role, involved in defense response to geminivirus infection. This chain is Protein NSP-INTERACTING KINASE 3 (NIK3), found in Arabidopsis thaliana (Mouse-ear cress).